Reading from the N-terminus, the 815-residue chain is MNIYRLSFVSCLVMAMPCAMAVEFNLNVLDKSMRDRIDISLLKEKGVIAPGEYFVSVAVNNNKISNGQKINWQKKGDKTIPCINDSLVDKFGLKPDIRQSLPQIDRCIDFSSRPEMLFNFDQANQQLNISIPQAWLAWHSENWAPPSTWKEGVAGVLMDYNLFASSYRPQDGSSSTNLNAYGTAGINAGAWRLRSDYQLNKTDSEDNHDQSGGISRTYLFRPLPQLGSKLTLGETDFSSNIFDGFSYTGAALASDDRMLPWELRGYAPQISGIAQTNATVTISQSGRVIYQKKVPPGPFIIDDLNQSVQGTLDVKVTEEDGRVNNFQVSAASTPFLTRQGQVRYKLAAGQPRPSMSHQTENETFFSNEVSWGMLSNTSLYGGLLISDDDYHSAAMGIGQNMLWLGALSFDVTWASSHFDTQQDERGLSYRFNYSKQVDATNSTISLAAYRFSDRHFHSYANYLDHKYNDSDAQDEKQTISLSVGQPITPLNLNLYANLLHQTWWNADASTTANITAGFNVDIGDWRDISISTSFNTTHYEDKDRDNQIYLSISLPFGNGGRVGYDMQNSSHSTIHRMSWNDTLDERNSWGMSAGLQSDRPDNGAQVSGNYQHLSSAGEWDISGTYAASDYSSVSSSWSGSFTATQYGAAFHRRSSTNEPRLMVSTDGVADIPVQGNLDYTNHFGIAVVPLISSYQPSTVAVNMNDLPDGVTVAENVIKETWIEGAIGYKSLASRSGKDVNVIIRNASGQFPPLGADIRQDDSGISVGMVGEEGHAWLSGVAENQLFTVVWGEQSCIIHLPERLEDTTKRLILPCH.

The N-terminal stretch at 1-21 is a signal peptide; the sequence is MNIYRLSFVSCLVMAMPCAMA. A disulfide bond links Cys795 and Cys814.

This sequence belongs to the fimbrial export usher family.

Its subcellular location is the cell outer membrane. Functionally, could be involved in the export and assembly of the putative YbgD fimbrial subunit across the outer membrane. This is an uncharacterized protein from Escherichia coli (strain K12).